The chain runs to 458 residues: Histone acetyltransferase Tip60 homolog (458 aa).

The disordered stretch occupies residues M1–P24. In terms of domain architecture, Tudor-knot spans V30–L86. Residues K94–I123 form a disordered region. Positions H101–K116 are enriched in basic and acidic residues. The MYST-type HAT domain occupies T168–P446. The C2HC MYST-type zinc-finger motif lies at I201–M226. K268 bears the N6-acetyllysine; by autocatalysis mark. Acetyl-CoA contacts are provided by residues I311–V313 and Q318–S324. E344 (proton donor/acceptor) is an active-site residue. S348 and S357 together coordinate acetyl-CoA.

This sequence belongs to the MYST (SAS/MOZ) family. In terms of assembly, interacts with transcription-associated protein trr-1. Probably a component of a complex with histone acetyltransferase (HAT) activity, at least composed of mys-1 and trr-1. Autoacetylation at Lys-268 is required for binding histones with high affinity and for proper function.

It is found in the nucleus. The catalysed reaction is L-lysyl-[protein] + acetyl-CoA = N(6)-acetyl-L-lysyl-[protein] + CoA + H(+). Its function is as follows. Probable catalytic subunit of the Tip60 chromatin-remodeling complex. Plays a role in acetylation of nucleosomal histone H4 and perhaps also H2A, probably acting as a component of the Tip60 histone acetyltransferase complex. Acts in the determination of vulval and distal tip cell (DTC) precursor cell fates. Involved in the positive regulation of transcription factor daf-16, probably acting by histone acetylation; thereby modulating stress resistance. This Caenorhabditis elegans protein is Histone acetyltransferase Tip60 homolog.